Consider the following 131-residue polypeptide: Small ribosomal subunit protein uS8 (131 aa).

It belongs to the universal ribosomal protein uS8 family. As to quaternary structure, part of the 30S ribosomal subunit. Contacts proteins S5 and S12.

Functionally, one of the primary rRNA binding proteins, it binds directly to 16S rRNA central domain where it helps coordinate assembly of the platform of the 30S subunit. This Campylobacter jejuni subsp. doylei (strain ATCC BAA-1458 / RM4099 / 269.97) protein is Small ribosomal subunit protein uS8.